The primary structure comprises 376 residues: Erythronate-4-phosphate dehydrogenase (376 aa).

Ser-45 and Thr-67 together coordinate substrate. Asp-147 contacts NAD(+). Arg-209 is an active-site residue. An NAD(+)-binding site is contributed by Asp-233. Glu-238 is a catalytic residue. The Proton donor role is filled by His-255. NAD(+) is bound at residue Gly-258. Position 259 (Tyr-259) interacts with substrate.

The protein belongs to the D-isomer specific 2-hydroxyacid dehydrogenase family. PdxB subfamily. Homodimer.

It localises to the cytoplasm. The catalysed reaction is 4-phospho-D-erythronate + NAD(+) = (R)-3-hydroxy-2-oxo-4-phosphooxybutanoate + NADH + H(+). Its pathway is cofactor biosynthesis; pyridoxine 5'-phosphate biosynthesis; pyridoxine 5'-phosphate from D-erythrose 4-phosphate: step 2/5. Its function is as follows. Catalyzes the oxidation of erythronate-4-phosphate to 3-hydroxy-2-oxo-4-phosphonooxybutanoate. This is Erythronate-4-phosphate dehydrogenase from Shewanella baltica (strain OS195).